Consider the following 85-residue polypeptide: Small ribosomal subunit protein uS17 (85 aa).

This sequence belongs to the universal ribosomal protein uS17 family. In terms of assembly, part of the 30S ribosomal subunit.

Functionally, one of the primary rRNA binding proteins, it binds specifically to the 5'-end of 16S ribosomal RNA. In Rhodospirillum centenum (strain ATCC 51521 / SW), this protein is Small ribosomal subunit protein uS17.